A 366-amino-acid chain; its full sequence is GTP cyclohydrolase 1 type 2 homolog (366 aa).

Zn(2+) contacts are provided by H64, H65, D102, H326, and E329.

Belongs to the GTP cyclohydrolase I type 2/NIF3 family. As to quaternary structure, toroid-shaped homohexamer that has a central cavity of about 38 Angstroms diameter.

In Staphylococcus aureus (strain Mu50 / ATCC 700699), this protein is GTP cyclohydrolase 1 type 2 homolog.